Consider the following 238-residue polypeptide: MIESFSRLTQAGPGSPRRATVQAAASGLGSADDQVFSRLLENRIVFLGSVVEDAVANAISAKLLLLAAEDPAADIYLYINSPGGSVSAGMAIYDTMQYVGNDVATVALGLAGSMGQFLLCAGTAGKRYALPHARIMMHQPHGGIGGTAADISIQAEQMLYTKRTLQERIAFHTGQTVEQIETDSDRDRWFTAEEAKEYGLVDHVVVRADQVPSVVSGAGMGLRRAGRTGFGPGGGSGR.

The Nucleophile role is filled by Ser113. The active site involves His138.

It belongs to the peptidase S14 family. As to quaternary structure, fourteen ClpP subunits assemble into 2 heptameric rings which stack back to back to give a disk-like structure with a central cavity, resembling the structure of eukaryotic proteasomes.

The protein resides in the cytoplasm. The enzyme catalyses Hydrolysis of proteins to small peptides in the presence of ATP and magnesium. alpha-casein is the usual test substrate. In the absence of ATP, only oligopeptides shorter than five residues are hydrolyzed (such as succinyl-Leu-Tyr-|-NHMec, and Leu-Tyr-Leu-|-Tyr-Trp, in which cleavage of the -Tyr-|-Leu- and -Tyr-|-Trp bonds also occurs).. Its function is as follows. Cleaves peptides in various proteins in a process that requires ATP hydrolysis. Has a chymotrypsin-like activity. Plays a major role in the degradation of misfolded proteins. The protein is ATP-dependent Clp protease proteolytic subunit 4 of Frankia casuarinae (strain DSM 45818 / CECT 9043 / HFP020203 / CcI3).